The primary structure comprises 226 residues: DELTA-thalatoxin-Avl1b (226 aa).

The N-terminal stretch at 1–21 is a signal peptide; that stretch reads MRHFVVFLYMFLALSIPTAFA. Positions 22–45 are excised as a propeptide; sequence KKHIVTKKGNHQDITNDNEGENAE. The tract at residues 50–59 is plays an important role in the hemolytic activity; the sequence is AVAGAVIAGG. The tract at residues 58-77 is N-terminal region; it reads GGELALKILTKILDEIGKID. Phosphocholine contacts are provided by Ser101, Val134, Ser152, Pro154, Tyr180, and Tyr184. Residues 152–167 form a trp-rich region, which is important for the binding to lipid membrane region; it reads SVPFDYNLYTNWWNVK. Residues 191–193 carry the Cell attachment site, crucial for protein stability motif; that stretch reads KPS.

Belongs to the actinoporin family. Sea anemone subfamily. In terms of assembly, octamer or nonamer in membranes. Monomer in the soluble state.

It localises to the secreted. The protein resides in the nematocyst. Its subcellular location is the target cell membrane. Its function is as follows. Pore-forming protein that forms cations-selective hydrophilic pores of around 1 nm and causes cytolysis. Pore formation is a multi-step process that involves specific recognition of membrane sphingomyelin (but neither cholesterol nor phosphatidylcholine) using aromatic rich region and adjacent phosphocholine (POC) binding site, firm binding to the membrane (mainly driven by hydrophobic interactions) accompanied by the transfer of the N-terminal region to the lipid-water interface and finally pore formation after oligomerization of monomers. The polypeptide is DELTA-thalatoxin-Avl1b (Actineria villosa (Okinawan sea anemone)).